The sequence spans 460 residues: Centrosomal protein CEP57L1 (460 aa).

A Phosphoserine modification is found at Ser49. 2 coiled-coil regions span residues Asn51–Lys228 and Ile317–His384. Polar residues predominate over residues Lys399–Asp410. A disordered region spans residues Lys399 to Pro423.

Belongs to the translokin family.

The protein resides in the cytoplasm. The protein localises to the cytoskeleton. It is found in the microtubule organizing center. It localises to the centrosome. In terms of biological role, centrosomal protein which may be required for microtubule attachment to centrosomes. The protein is Centrosomal protein CEP57L1 (CEP57L1) of Homo sapiens (Human).